Here is a 60-residue protein sequence, read N- to C-terminus: UPF0434 protein Daci_3569 (60 aa).

It belongs to the UPF0434 family.

The protein is UPF0434 protein Daci_3569 of Delftia acidovorans (strain DSM 14801 / SPH-1).